The following is an 876-amino-acid chain: DNA mismatch repair protein MutS (876 aa).

626–633 (GPNMGGKS) lines the ATP pocket.

The protein belongs to the DNA mismatch repair MutS family.

Its function is as follows. This protein is involved in the repair of mismatches in DNA. It is possible that it carries out the mismatch recognition step. This protein has a weak ATPase activity. This Bordetella bronchiseptica (strain ATCC BAA-588 / NCTC 13252 / RB50) (Alcaligenes bronchisepticus) protein is DNA mismatch repair protein MutS.